A 115-amino-acid polypeptide reads, in one-letter code: Phosphoribosyl-ATP pyrophosphatase (115 aa).

It belongs to the PRA-PH family.

It is found in the cytoplasm. The enzyme catalyses 1-(5-phospho-beta-D-ribosyl)-ATP + H2O = 1-(5-phospho-beta-D-ribosyl)-5'-AMP + diphosphate + H(+). The protein operates within amino-acid biosynthesis; L-histidine biosynthesis; L-histidine from 5-phospho-alpha-D-ribose 1-diphosphate: step 2/9. In Bordetella parapertussis (strain 12822 / ATCC BAA-587 / NCTC 13253), this protein is Phosphoribosyl-ATP pyrophosphatase.